A 962-amino-acid chain; its full sequence is Phosphatidylinositol 3,4,5-trisphosphate 3-phosphatase and dual-specificity protein phosphatase daf-18 (962 aa).

The tract at residues 1 to 37 (MVTPPPDVPSTSTRSMARDLQENPNRQPGEPRVSEPY) is disordered. The region spanning 58–230 (CRTEYQNIDL…YYYHKLRERE (173 aa)) is the Phosphatase tensin-type domain. The Phosphocysteine intermediate role is filled by cysteine 169. Residues 234–530 (LPLRMQLIGV…GMKLHVVLRC (297 aa)) form the C2 tensin-type domain. Disordered regions lie at residues 382–416 (DTSIGRKNGMRRNETPMRKIDPETGNEFESPWQIV) and 689–731 (IENT…RLPD). Positions 392 to 403 (RRNETPMRKIDP) are enriched in basic and acidic residues. A compositionally biased stretch (low complexity) spans 692 to 704 (TGPSTSGSSAPGT). Residues 706–720 (KKTEASQSDKVKPAT) are compositionally biased toward basic and acidic residues.

The protein belongs to the PTEN phosphatase protein family. In terms of assembly, interacts (via C-terminus) with vab-1 (via kinase domain); the interaction is independent of vab-1 kinase activity. Interacts with arr-1 and mpz-1; the interaction may inhibit daf-18. Interacts (via C-terminus) with daf-2 (via kinase domain). Phosphorylated by vab-1 on tyrosine residues which may promote daf-18 degradation. In terms of tissue distribution, expressed in embryo, larvae and in adult germline (at protein level). Expressed at equal levels in the 6 vulva precursor cells (VPCs) of L2 larvae and in the descendant cells of the induced VPCs (at protein level). Expressed in the uterus (at protein level). Expressed in the Z2/Z3 germline precursors, oocytes, several amphid neurons and weakly in the nerve cord (at protein level).

The protein resides in the perikaryon. It localises to the cell membrane. Its subcellular location is the cell projection. It is found in the axon. The protein localises to the dendrite. The protein resides in the cytoplasm. It localises to the nucleus. The enzyme catalyses a 1,2-diacyl-sn-glycero-3-phospho-(1D-myo-inositol-3,4,5-trisphosphate) + H2O = a 1,2-diacyl-sn-glycero-3-phospho-(1D-myo-inositol-4,5-bisphosphate) + phosphate. It carries out the reaction O-phospho-L-seryl-[protein] + H2O = L-seryl-[protein] + phosphate. It catalyses the reaction O-phospho-L-threonyl-[protein] + H2O = L-threonyl-[protein] + phosphate. The catalysed reaction is O-phospho-L-tyrosyl-[protein] + H2O = L-tyrosyl-[protein] + phosphate. The enzyme catalyses 1,2-dioctanoyl-sn-glycero-3-phospho-(1D-myo-inositol-3,4,5-trisphosphate) + H2O = 1,2-dioctanoyl-sn-glycero-3-phospho-(1D-myo-inositol-4,5-bisphosphate) + phosphate. It carries out the reaction 1,2-dihexadecanoyl-sn-glycero-3-phospho-(1D-myo-inositol-3,4,5-trisphosphate) + H2O = 1,2-dihexadecanoyl-sn-glycero-3-phospho-(1D-myo-inositol-4,5-bisphosphate) + phosphate. Its function is as follows. Acts as a dual-specificity protein phosphatase, dephosphorylating tyrosine-, serine- and threonine-phosphorylated proteins. Also acts as a lipid phosphatase, removing the phosphate in the D3 position of the inositol ring from phosphatidylinositol 3,4,5-trisphosphate. By dephosphorylating PtdIns(3,4,5)P3 antagonizes PtdIns(3,4,5)P3 production by age-1/PI3K and thus, negatively regulates daf-2-mediated processes including dauer formation, longevity, fat metabolism, chemotaxis towards salt, thermotolerance and axon guidance. Similarly, promotes apoptosis during embryonic development by suppressing the recruitment of the prosurvival kinases akt-1/2 to the plasma membrane. In addition, regulates Z2/Z3 germline precursor cell cycle by maintaining them arrested at the G2 stage and by controlling their growth during L1 diapause. After sperm depletion in larvae and adult hermaphrodites, promotes germline stem cell quiescence and oocyte accumulation. By dephosphorylating ephrin-like receptor vab-1 on tyrosine residues, negatively regulates oocyte maturation downstream of vab-1 and upstream of mpk-1, independently of daf-2. Plays a role in postembryonic muscle arm extensions. Required for neurite outgrowth during AIY interneuron embryonic development. Mainly independently of daf-2, negatively regulates vulva induction probably by inhibiting mpk-1 phosphorylation. Both lipid and protein phosphatase activities are required for the regulation of vulva induction. Plays a role in gonad and germline development following the L1 diapause. This Caenorhabditis elegans protein is Phosphatidylinositol 3,4,5-trisphosphate 3-phosphatase and dual-specificity protein phosphatase daf-18.